The following is a 136-amino-acid chain: Lipoprotein YghG (136 aa).

Residues 1-24 (MSIKQMPGRVLISLLLSVTGLLSG) form the signal peptide. Cys-25 carries the N-palmitoyl cysteine lipid modification. Residue Cys-25 is the site of S-diacylglycerol cysteine attachment.

Belongs to the GspS/AspS pilotin family.

It localises to the cell outer membrane. Its function is as follows. Involved in a type II secretion system (T2SS, formerly general secretion pathway, GSP) for the export of folded proteins across the outer membrane. In a functional T2SS this subunit helps assemble the outer membrane channel. This Escherichia coli (strain K12) protein is Lipoprotein YghG (yghG).